The primary structure comprises 357 residues: S-adenosylmethionine:tRNA ribosyltransferase-isomerase (357 aa).

It belongs to the QueA family. As to quaternary structure, monomer.

Its subcellular location is the cytoplasm. It carries out the reaction 7-aminomethyl-7-carbaguanosine(34) in tRNA + S-adenosyl-L-methionine = epoxyqueuosine(34) in tRNA + adenine + L-methionine + 2 H(+). It functions in the pathway tRNA modification; tRNA-queuosine biosynthesis. Functionally, transfers and isomerizes the ribose moiety from AdoMet to the 7-aminomethyl group of 7-deazaguanine (preQ1-tRNA) to give epoxyqueuosine (oQ-tRNA). The sequence is that of S-adenosylmethionine:tRNA ribosyltransferase-isomerase from Phenylobacterium zucineum (strain HLK1).